We begin with the raw amino-acid sequence, 145 residues long: Small ribosomal subunit protein uS12 (145 aa).

This sequence belongs to the universal ribosomal protein uS12 family. Part of the 30S ribosomal subunit.

With S4 and S5 plays an important role in translational accuracy. Located at the interface of the 30S and 50S subunits. In Cenarchaeum symbiosum (strain A), this protein is Small ribosomal subunit protein uS12.